A 247-amino-acid polypeptide reads, in one-letter code: uncharacterized protein (247 aa).

Composition is skewed to low complexity over residues methionine 1 to proline 12 and proline 21 to glutamine 43. Disordered stretches follow at residues methionine 1–glutamine 43 and leucine 157–isoleucine 247. Basic and acidic residues-rich tracts occupy residues glutamate 170 to lysine 196 and lysine 210 to alanine 229.

This is an uncharacterized protein from Bacillus subtilis (strain 168).